The sequence spans 276 residues: Rhamnulose-1-phosphate aldolase (276 aa).

Glu-117 is a catalytic residue. The Zn(2+) site is built by His-141, His-143, and His-212.

This sequence belongs to the aldolase class II family. RhaD subfamily. Homotetramer. Zn(2+) serves as cofactor.

The protein localises to the cytoplasm. It catalyses the reaction L-rhamnulose 1-phosphate = (S)-lactaldehyde + dihydroxyacetone phosphate. It participates in carbohydrate degradation; L-rhamnose degradation; glycerone phosphate from L-rhamnose: step 3/3. Its function is as follows. Catalyzes the reversible cleavage of L-rhamnulose-1-phosphate to dihydroxyacetone phosphate (DHAP) and L-lactaldehyde. The protein is Rhamnulose-1-phosphate aldolase of Klebsiella pneumoniae (strain 342).